We begin with the raw amino-acid sequence, 93 residues long: ATP synthase subunit c (93 aa).

Helical transmembrane passes span 13-33 (AIGV…GMGI) and 58-78 (ISLA…FILL).

This sequence belongs to the ATPase C chain family. In terms of assembly, F-type ATPases have 2 components, F(1) - the catalytic core - and F(0) - the membrane proton channel. F(1) has five subunits: alpha(3), beta(3), gamma(1), delta(1), epsilon(1). F(0) has three main subunits: a(1), b(2) and c(10-14). The alpha and beta chains form an alternating ring which encloses part of the gamma chain. F(1) is attached to F(0) by a central stalk formed by the gamma and epsilon chains, while a peripheral stalk is formed by the delta and b chains.

The protein localises to the cell inner membrane. F(1)F(0) ATP synthase produces ATP from ADP in the presence of a proton or sodium gradient. F-type ATPases consist of two structural domains, F(1) containing the extramembraneous catalytic core and F(0) containing the membrane proton channel, linked together by a central stalk and a peripheral stalk. During catalysis, ATP synthesis in the catalytic domain of F(1) is coupled via a rotary mechanism of the central stalk subunits to proton translocation. Functionally, key component of the F(0) channel; it plays a direct role in translocation across the membrane. A homomeric c-ring of between 10-14 subunits forms the central stalk rotor element with the F(1) delta and epsilon subunits. In Campylobacter hominis (strain ATCC BAA-381 / DSM 21671 / CCUG 45161 / LMG 19568 / NCTC 13146 / CH001A), this protein is ATP synthase subunit c.